Consider the following 553-residue polypeptide: Putative transport protein YidE (553 aa).

The next 5 membrane-spanning stretches (helical) occupy residues 4-24 (IALT…IGNV), 28-48 (GIGL…HFVS), 65-85 (FGLI…FFAS), 95-115 (LFAV…HKLF), and 158-178 (MSYA…MWML). 2 consecutive RCK C-terminal domains span residues 191 to 276 (QQHE…VIGQ) and 279 to 361 (DTSL…VLGN). The next 6 helical transmembrane spans lie at 371 to 391 (MLPV…PVFV), 393 to 413 (GFPA…ALIL), 439 to 459 (IVLF…NTLV), 464 to 484 (LSWI…VGIL), 493 to 513 (YLTM…LAFA), and 533 to 553 (LVMF…WSIG).

Belongs to the AAE transporter (TC 2.A.81) family. YidE subfamily.

It localises to the cell membrane. The sequence is that of Putative transport protein YidE from Shigella boydii serotype 18 (strain CDC 3083-94 / BS512).